Reading from the N-terminus, the 312-residue chain is Methionyl-tRNA formyltransferase (312 aa).

109–112 is a (6S)-5,6,7,8-tetrahydrofolate binding site; it reads SLLP.

It belongs to the Fmt family.

The catalysed reaction is L-methionyl-tRNA(fMet) + (6R)-10-formyltetrahydrofolate = N-formyl-L-methionyl-tRNA(fMet) + (6S)-5,6,7,8-tetrahydrofolate + H(+). In terms of biological role, attaches a formyl group to the free amino group of methionyl-tRNA(fMet). The formyl group appears to play a dual role in the initiator identity of N-formylmethionyl-tRNA by promoting its recognition by IF2 and preventing the misappropriation of this tRNA by the elongation apparatus. In Anaeromyxobacter dehalogenans (strain 2CP-1 / ATCC BAA-258), this protein is Methionyl-tRNA formyltransferase.